A 438-amino-acid chain; its full sequence is MQTIYTRITDIKGNLITVEAEGASLGELVQIERADGRSSYASVLRFDAKKVTLQVFGGTSGLSTGDKVVFLGRPMEVVYGDSLLGRRFNGTGKPIDNEEICFGEPIPITTPSFNPVCRIVPREMVRTNIPMIDMFNCLVKSQKIPIFSSSGENHNALLMRIAAQTDADIVIIGGMGLTFVDYSFFVEESQRLGFADKCVMFIHKAVDAPVECVLIPDMALACAERFALEQKKNVLVLLTDMTAFADALKEIAITMDQIPANRGYPGSLYSDLAVRYEKAVDIAQGGSITLISVTTMPGDDITHPVPDNTGFITEGQFYLKDNRIDPFGSLSRLKQLVIGKRTREDHGDLANALIRLYADSRKSAERMSMGFKLSNWDKKLLAFAELFETRLMSLEVNIPLEEALDIGWKILAQSFHSEEVGIKEQLIQKYWPKACLHK.

It belongs to the ATPase alpha/beta chains family.

Functionally, produces ATP from ADP in the presence of a proton gradient across the membrane. The V-type beta chain is a regulatory subunit. This chain is V-type ATP synthase beta chain (atpB), found in Chlamydia muridarum (strain MoPn / Nigg).